Consider the following 1335-residue polypeptide: Probable serine/threonine-protein kinase ndrC (1335 aa).

4 disordered regions span residues 1–70 (MSRK…KKGS), 85–158 (VDTH…LIPS), 276–447 (LPPP…SPLN), and 462–603 (TTTT…NNNK). Over residues 8-17 (NRSSSSNSIE) the composition is skewed to polar residues. Over residues 27 to 41 (SNISNSSNINCNNSS) the composition is skewed to low complexity. Basic residues predominate over residues 55 to 70 (RSKHSSPIHSLKKKGS). A compositionally biased stretch (low complexity) spans 89-117 (SSSNSNNNSSSNNNNNNNNHNINSSSESS). Residues 118–132 (TPTTPRSSFTPQVTM) are compositionally biased toward polar residues. The span at 133-153 (NSNQSSGNNSPQLSSRSSSQS) shows a compositional bias: low complexity. Over residues 276–288 (LPPPSQQQLPPPQ) the composition is skewed to pro residues. Composition is skewed to low complexity over residues 289–331 (SHQQ…TPQS), 345–368 (NQQQ…SPNK), 382–396 (SPSP…SPSS), 412–424 (PTPL…SPSS), 437–447 (PSSFSGGSPLN), and 462–484 (TTTT…TTIS). Over residues 485 to 497 (NPNYTQNLPTTPL) the composition is skewed to polar residues. Low complexity predominate over residues 498-507 (SNSSSNNNNN). The span at 508-528 (GSFITLQDTTNNKSIINNNRE) shows a compositional bias: polar residues. The segment covering 540-566 (SSGSSNTTSSTTNTTTPSSSSLTTSSG) has biased composition (low complexity). Residues 567 to 581 (KESRDRDSKDKEKDL) are compositionally biased toward basic and acidic residues. Low complexity predominate over residues 586–602 (NNNNNNNNNNNNNNNNN). Positions 586 to 613 (NNNNNNNNNNNNNNNNNKVEKEKENYCK) form a coiled coil. In terms of domain architecture, Protein kinase spans 718-1019 (FKILTQIGKG…KQDFKNHPFF (302 aa)). Residues 724 to 732 (IGKGGFGQV) and K747 contribute to the ATP site. D840 serves as the catalytic Proton acceptor. Residues 1020 to 1106 (KNHNWDEIVN…RKSSALSLSM (87 aa)) form the AGC-kinase C-terminal domain. The span at 1239–1284 (SQSQPSLANQLQSSSSSPSPSLQSQSQSPSLQSSSKSTPNLSSSLL) shows a compositional bias: low complexity. The interval 1239–1313 (SQSQPSLANQ…IKKENESEEI (75 aa)) is disordered. Basic and acidic residues predominate over residues 1287–1313 (PVKEELEYKNQTENEVEIKKENESEEI). Residues 1289 to 1325 (KEELEYKNQTENEVEIKKENESEEIQSLRDQLKEIII) adopt a coiled-coil conformation.

Belongs to the protein kinase superfamily. AGC Ser/Thr protein kinase family.

The catalysed reaction is L-seryl-[protein] + ATP = O-phospho-L-seryl-[protein] + ADP + H(+). It carries out the reaction L-threonyl-[protein] + ATP = O-phospho-L-threonyl-[protein] + ADP + H(+). The chain is Probable serine/threonine-protein kinase ndrC (ndrC) from Dictyostelium discoideum (Social amoeba).